We begin with the raw amino-acid sequence, 88 residues long: Putative septation protein SpoVG (88 aa).

Belongs to the SpoVG family.

Its function is as follows. Could be involved in septation. The protein is Putative septation protein SpoVG of Lachnospira eligens (strain ATCC 27750 / DSM 3376 / VPI C15-48 / C15-B4) (Eubacterium eligens).